A 658-amino-acid polypeptide reads, in one-letter code: Biosynthetic arginine decarboxylase (658 aa).

The residue at position 127 (lysine 127) is an N6-(pyridoxal phosphate)lysine. 307-317 contacts substrate; the sequence is FDVGGGLGVDY.

It belongs to the Orn/Lys/Arg decarboxylase class-II family. SpeA subfamily. In terms of assembly, homotetramer. It depends on Mg(2+) as a cofactor. The cofactor is pyridoxal 5'-phosphate.

It is found in the periplasm. It catalyses the reaction L-arginine + H(+) = agmatine + CO2. The protein operates within amine and polyamine biosynthesis; agmatine biosynthesis; agmatine from L-arginine: step 1/1. Its function is as follows. Catalyzes the biosynthesis of agmatine from arginine. This Escherichia coli O157:H7 protein is Biosynthetic arginine decarboxylase (speA).